A 299-amino-acid polypeptide reads, in one-letter code: ATP phosphoribosyltransferase (299 aa).

Belongs to the ATP phosphoribosyltransferase family. Long subfamily. It depends on Mg(2+) as a cofactor.

It localises to the cytoplasm. It carries out the reaction 1-(5-phospho-beta-D-ribosyl)-ATP + diphosphate = 5-phospho-alpha-D-ribose 1-diphosphate + ATP. Its pathway is amino-acid biosynthesis; L-histidine biosynthesis; L-histidine from 5-phospho-alpha-D-ribose 1-diphosphate: step 1/9. Feedback inhibited by histidine. Its function is as follows. Catalyzes the condensation of ATP and 5-phosphoribose 1-diphosphate to form N'-(5'-phosphoribosyl)-ATP (PR-ATP). Has a crucial role in the pathway because the rate of histidine biosynthesis seems to be controlled primarily by regulation of HisG enzymatic activity. The protein is ATP phosphoribosyltransferase of Shewanella baltica (strain OS155 / ATCC BAA-1091).